A 188-amino-acid chain; its full sequence is Elongation factor P (188 aa).

An N6-(3,6-diaminohexanoyl)-5-hydroxylysine modification is found at lysine 34.

Belongs to the elongation factor P family. Post-translationally, may be beta-lysylated on the epsilon-amino group of Lys-34 by the combined action of EpmA and EpmB, and then hydroxylated on the C5 position of the same residue by EpmC (if this protein is present). Lysylation is critical for the stimulatory effect of EF-P on peptide-bond formation. The lysylation moiety may extend toward the peptidyltransferase center and stabilize the terminal 3-CCA end of the tRNA. Hydroxylation of the C5 position on Lys-34 may allow additional potential stabilizing hydrogen-bond interactions with the P-tRNA.

The protein localises to the cytoplasm. The protein operates within protein biosynthesis; polypeptide chain elongation. Its function is as follows. Involved in peptide bond synthesis. Alleviates ribosome stalling that occurs when 3 or more consecutive Pro residues or the sequence PPG is present in a protein, possibly by augmenting the peptidyl transferase activity of the ribosome. Modification of Lys-34 is required for alleviation. The chain is Elongation factor P from Cronobacter sakazakii (strain ATCC BAA-894) (Enterobacter sakazakii).